Here is a 292-residue protein sequence, read N- to C-terminus: 33 kDa chaperonin (292 aa).

2 cysteine pairs are disulfide-bonded: Cys230–Cys232 and Cys263–Cys266.

This sequence belongs to the HSP33 family. In terms of processing, under oxidizing conditions two disulfide bonds are formed involving the reactive cysteines. Under reducing conditions zinc is bound to the reactive cysteines and the protein is inactive.

It is found in the cytoplasm. In terms of biological role, redox regulated molecular chaperone. Protects both thermally unfolding and oxidatively damaged proteins from irreversible aggregation. Plays an important role in the bacterial defense system toward oxidative stress. This chain is 33 kDa chaperonin, found in Cronobacter sakazakii (strain ATCC BAA-894) (Enterobacter sakazakii).